A 76-amino-acid chain; its full sequence is U7-lycotoxin-Ls1b (76 aa).

The N-terminal stretch at 1 to 22 (MKLISFTGLALLLIVSLIDVEA) is a signal peptide. A propeptide spanning residues 23 to 26 (QNEG) is cleaved from the precursor.

This sequence belongs to the neurotoxin 19 (CSTX) family. 07 (U7-Lctx) subfamily. Contains 4 disulfide bonds. In terms of tissue distribution, expressed by the venom gland.

Its subcellular location is the secreted. The chain is U7-lycotoxin-Ls1b from Lycosa singoriensis (Wolf spider).